Reading from the N-terminus, the 582-residue chain is Aspartate--tRNA ligase (582 aa).

Glu-174 serves as a coordination point for L-aspartate. Positions Gln-198–Lys-201 are aspartate. Arg-220 contributes to the L-aspartate binding site. Residues Arg-220–Glu-222 and Gln-229 each bind ATP. Residue His-443 coordinates L-aspartate. Glu-477 is a binding site for ATP. Arg-484 contributes to the L-aspartate binding site. ATP is bound at residue Gly-529–Arg-532.

This sequence belongs to the class-II aminoacyl-tRNA synthetase family. Type 1 subfamily. In terms of assembly, homodimer.

It is found in the cytoplasm. It catalyses the reaction tRNA(Asp) + L-aspartate + ATP = L-aspartyl-tRNA(Asp) + AMP + diphosphate. Functionally, catalyzes the attachment of L-aspartate to tRNA(Asp) in a two-step reaction: L-aspartate is first activated by ATP to form Asp-AMP and then transferred to the acceptor end of tRNA(Asp). The chain is Aspartate--tRNA ligase from Streptococcus pyogenes serotype M28 (strain MGAS6180).